We begin with the raw amino-acid sequence, 418 residues long: Flavin-dependent L-tryptophan oxidase VioA (418 aa).

Residue Gly13 coordinates Mg(2+). Residue Ser15 participates in FAD binding. Gly16 provides a ligand contact to Mg(2+). Residues Asp38, Arg46, and Arg64 each coordinate FAD. Substrate contacts are provided by Arg64 and His163. FAD is bound at residue Leu208. Ala240 contacts Mg(2+). Tyr309 is a substrate binding site. Met398 contributes to the FAD binding site.

It belongs to the flavin monoamine oxidase family. As to quaternary structure, homodimer. Requires FAD as cofactor. Mg(2+) is required as a cofactor.

The catalysed reaction is L-tryptophan + O2 = 2-iminio-3-(indol-3-yl)propanoate + H2O2. It carries out the reaction 7-chloro-L-tryptophan + O2 = 3-(7-chloroindol-3-yl)-2-iminopropanoate + H2O2. Its pathway is pigment biosynthesis; violacein biosynthesis. The enzyme generates the imine form of indole 3-pyruvate (IPA) from L-tryptophan (L-Trp), with concomitant two-electron reduction of O(2) to H(2)O(2). In Chromobacterium violaceum (strain ATCC 12472 / DSM 30191 / JCM 1249 / CCUG 213 / NBRC 12614 / NCIMB 9131 / NCTC 9757 / MK), this protein is Flavin-dependent L-tryptophan oxidase VioA (vioA).